A 208-amino-acid polypeptide reads, in one-letter code: Thiamine-phosphate synthase (208 aa).

4-amino-2-methyl-5-(diphosphooxymethyl)pyrimidine is bound by residues 38–42 and Asn70; that span reads QYRSK. Residues Asp71 and Asp90 each contribute to the Mg(2+) site. Thr109 is a binding site for 4-amino-2-methyl-5-(diphosphooxymethyl)pyrimidine. 136 to 138 is a binding site for 2-[(2R,5Z)-2-carboxy-4-methylthiazol-5(2H)-ylidene]ethyl phosphate; sequence SAT. Lys139 lines the 4-amino-2-methyl-5-(diphosphooxymethyl)pyrimidine pocket. 2-[(2R,5Z)-2-carboxy-4-methylthiazol-5(2H)-ylidene]ethyl phosphate-binding positions include Gly166 and 186 to 187; that span reads VS.

The protein belongs to the thiamine-phosphate synthase family. Requires Mg(2+) as cofactor.

The catalysed reaction is 2-[(2R,5Z)-2-carboxy-4-methylthiazol-5(2H)-ylidene]ethyl phosphate + 4-amino-2-methyl-5-(diphosphooxymethyl)pyrimidine + 2 H(+) = thiamine phosphate + CO2 + diphosphate. It carries out the reaction 2-(2-carboxy-4-methylthiazol-5-yl)ethyl phosphate + 4-amino-2-methyl-5-(diphosphooxymethyl)pyrimidine + 2 H(+) = thiamine phosphate + CO2 + diphosphate. It catalyses the reaction 4-methyl-5-(2-phosphooxyethyl)-thiazole + 4-amino-2-methyl-5-(diphosphooxymethyl)pyrimidine + H(+) = thiamine phosphate + diphosphate. It functions in the pathway cofactor biosynthesis; thiamine diphosphate biosynthesis; thiamine phosphate from 4-amino-2-methyl-5-diphosphomethylpyrimidine and 4-methyl-5-(2-phosphoethyl)-thiazole: step 1/1. Condenses 4-methyl-5-(beta-hydroxyethyl)thiazole monophosphate (THZ-P) and 2-methyl-4-amino-5-hydroxymethyl pyrimidine pyrophosphate (HMP-PP) to form thiamine monophosphate (TMP). This Aromatoleum aromaticum (strain DSM 19018 / LMG 30748 / EbN1) (Azoarcus sp. (strain EbN1)) protein is Thiamine-phosphate synthase.